The sequence spans 155 residues: UPF0305 protein MTH_811 (155 aa).

This sequence belongs to the UPF0305 family.

This chain is UPF0305 protein MTH_811, found in Methanothermobacter thermautotrophicus (strain ATCC 29096 / DSM 1053 / JCM 10044 / NBRC 100330 / Delta H) (Methanobacterium thermoautotrophicum).